The primary structure comprises 420 residues: ATP-dependent Clp protease ATP-binding subunit ClpX (420 aa).

The region spanning 3 to 57 is the ClpX-type ZB domain; the sequence is KKTPGTNGKQKLFCSFCGKEQDAVKRLVAGPGVYICDECISLCNEIIAEDHEHSH. Positions 16, 19, 38, and 41 each coordinate Zn(2+). 122–129 contacts ATP; sequence PTGSGKTL.

The protein belongs to the ClpX chaperone family. Component of the ClpX-ClpP complex. Forms a hexameric ring that, in the presence of ATP, binds to fourteen ClpP subunits assembled into a disk-like structure with a central cavity, resembling the structure of eukaryotic proteasomes.

Its function is as follows. ATP-dependent specificity component of the Clp protease. It directs the protease to specific substrates. Can perform chaperone functions in the absence of ClpP. This Leptospira borgpetersenii serovar Hardjo-bovis (strain L550) protein is ATP-dependent Clp protease ATP-binding subunit ClpX.